The sequence spans 347 residues: Quinolinate synthase (347 aa).

2 residues coordinate iminosuccinate: His47 and Ser68. Cys113 is a [4Fe-4S] cluster binding site. Iminosuccinate is bound by residues Tyr139 to Asn141 and Ser156. Residue Cys200 coordinates [4Fe-4S] cluster. Residues His226–Glu228 and Thr243 each bind iminosuccinate. [4Fe-4S] cluster is bound at residue Cys297.

It belongs to the quinolinate synthase family. Type 1 subfamily. It depends on [4Fe-4S] cluster as a cofactor.

The protein resides in the cytoplasm. The enzyme catalyses iminosuccinate + dihydroxyacetone phosphate = quinolinate + phosphate + 2 H2O + H(+). The protein operates within cofactor biosynthesis; NAD(+) biosynthesis; quinolinate from iminoaspartate: step 1/1. Catalyzes the condensation of iminoaspartate with dihydroxyacetone phosphate to form quinolinate. The chain is Quinolinate synthase from Escherichia coli O9:H4 (strain HS).